A 110-amino-acid chain; its full sequence is Flagellar hook-basal body complex protein FliE (110 aa).

It belongs to the FliE family.

It localises to the bacterial flagellum basal body. The sequence is that of Flagellar hook-basal body complex protein FliE from Pseudomonas putida (strain GB-1).